A 279-amino-acid polypeptide reads, in one-letter code: Bis(5'-nucleosyl)-tetraphosphatase, symmetrical (279 aa).

Belongs to the Ap4A hydrolase family.

It carries out the reaction P(1),P(4)-bis(5'-adenosyl) tetraphosphate + H2O = 2 ADP + 2 H(+). Its function is as follows. Hydrolyzes diadenosine 5',5'''-P1,P4-tetraphosphate to yield ADP. The sequence is that of Bis(5'-nucleosyl)-tetraphosphatase, symmetrical from Edwardsiella ictaluri (strain 93-146).